A 195-amino-acid polypeptide reads, in one-letter code: Pyridoxal 5'-phosphate synthase subunit PdxT (195 aa).

55–57 contributes to the L-glutamine binding site; that stretch reads GES. The Nucleophile role is filled by C84. L-glutamine-binding positions include R111 and 139-140; that span reads IR. Residues H175 and E177 each act as charge relay system in the active site.

The protein belongs to the glutaminase PdxT/SNO family. In the presence of PdxS, forms a dodecamer of heterodimers. Only shows activity in the heterodimer.

The catalysed reaction is aldehydo-D-ribose 5-phosphate + D-glyceraldehyde 3-phosphate + L-glutamine = pyridoxal 5'-phosphate + L-glutamate + phosphate + 3 H2O + H(+). It catalyses the reaction L-glutamine + H2O = L-glutamate + NH4(+). It functions in the pathway cofactor biosynthesis; pyridoxal 5'-phosphate biosynthesis. In terms of biological role, catalyzes the hydrolysis of glutamine to glutamate and ammonia as part of the biosynthesis of pyridoxal 5'-phosphate. The resulting ammonia molecule is channeled to the active site of PdxS. This is Pyridoxal 5'-phosphate synthase subunit PdxT from Methanosphaerula palustris (strain ATCC BAA-1556 / DSM 19958 / E1-9c).